A 571-amino-acid chain; its full sequence is Proline--tRNA ligase (571 aa).

It belongs to the class-II aminoacyl-tRNA synthetase family. ProS type 1 subfamily. Homodimer.

Its subcellular location is the cytoplasm. The catalysed reaction is tRNA(Pro) + L-proline + ATP = L-prolyl-tRNA(Pro) + AMP + diphosphate. Catalyzes the attachment of proline to tRNA(Pro) in a two-step reaction: proline is first activated by ATP to form Pro-AMP and then transferred to the acceptor end of tRNA(Pro). As ProRS can inadvertently accommodate and process non-cognate amino acids such as alanine and cysteine, to avoid such errors it has two additional distinct editing activities against alanine. One activity is designated as 'pretransfer' editing and involves the tRNA(Pro)-independent hydrolysis of activated Ala-AMP. The other activity is designated 'posttransfer' editing and involves deacylation of mischarged Ala-tRNA(Pro). The misacylated Cys-tRNA(Pro) is not edited by ProRS. The sequence is that of Proline--tRNA ligase from Actinobacillus pleuropneumoniae serotype 5b (strain L20).